Reading from the N-terminus, the 511-residue chain is 2-isopropylmalate synthase (511 aa).

The Pyruvate carboxyltransferase domain occupies I5–K267. D14, H202, H204, and N238 together coordinate Mn(2+). Residues K391–S511 form a regulatory domain region.

This sequence belongs to the alpha-IPM synthase/homocitrate synthase family. LeuA type 1 subfamily. As to quaternary structure, homodimer. Mn(2+) serves as cofactor.

It is found in the cytoplasm. It catalyses the reaction 3-methyl-2-oxobutanoate + acetyl-CoA + H2O = (2S)-2-isopropylmalate + CoA + H(+). Its pathway is amino-acid biosynthesis; L-leucine biosynthesis; L-leucine from 3-methyl-2-oxobutanoate: step 1/4. Functionally, catalyzes the condensation of the acetyl group of acetyl-CoA with 3-methyl-2-oxobutanoate (2-ketoisovalerate) to form 3-carboxy-3-hydroxy-4-methylpentanoate (2-isopropylmalate). The polypeptide is 2-isopropylmalate synthase (Staphylococcus saprophyticus subsp. saprophyticus (strain ATCC 15305 / DSM 20229 / NCIMB 8711 / NCTC 7292 / S-41)).